The sequence spans 359 residues: MPEHDPHQENRTVSSVRLEDDAAEASLRPQSLAEFIGQRASRENLSIFIQAAKARGEAMDHVLLHGPPGLGKTTLAQIVSRELGVGFRATSGPVIQRAGDLAAILTNLQPRDVLFIDEIHRLQPAIEEVLYPAMEDFQLDLIIGEGPAARSVRIDLAPFTLVAATTRAGLLATPLRDRFGIPLRLIFYTASELELIVSRGAEKLGFDLSREGAAEIARRSRGTPRIAGRLLRRVRDFAMVQGVSPVDRSTADAALQRLEVDSLGLDAMDRRYLHRIAVHHAGGPVGVETLAAALAEARDTLEDVIEPYLIQEGLILRTSRGRMLGEAGWRHLGLVPPPSAAGGQPDMLTLLHRDGSADE.

Residues 1–10 (MPEHDPHQEN) show a composition bias toward basic and acidic residues. Residues 1-20 (MPEHDPHQENRTVSSVRLED) are disordered. The large ATPase domain (RuvB-L) stretch occupies residues 4–188 (HDPHQENRTV…FGIPLRLIFY (185 aa)). ATP-binding positions include Leu-27, Arg-28, Gly-69, Lys-72, Thr-73, Thr-74, 135–137 (EDF), Arg-178, Tyr-188, and Arg-225. Position 73 (Thr-73) interacts with Mg(2+). The small ATPAse domain (RuvB-S) stretch occupies residues 189-259 (TASELELIVS…TADAALQRLE (71 aa)). The tract at residues 262 to 359 (SLGLDAMDRR…LLHRDGSADE (98 aa)) is head domain (RuvB-H). DNA-binding residues include Arg-298, Arg-317, and Arg-322.

Belongs to the RuvB family. Homohexamer. Forms an RuvA(8)-RuvB(12)-Holliday junction (HJ) complex. HJ DNA is sandwiched between 2 RuvA tetramers; dsDNA enters through RuvA and exits via RuvB. An RuvB hexamer assembles on each DNA strand where it exits the tetramer. Each RuvB hexamer is contacted by two RuvA subunits (via domain III) on 2 adjacent RuvB subunits; this complex drives branch migration. In the full resolvosome a probable DNA-RuvA(4)-RuvB(12)-RuvC(2) complex forms which resolves the HJ.

Its subcellular location is the cytoplasm. The catalysed reaction is ATP + H2O = ADP + phosphate + H(+). The RuvA-RuvB-RuvC complex processes Holliday junction (HJ) DNA during genetic recombination and DNA repair, while the RuvA-RuvB complex plays an important role in the rescue of blocked DNA replication forks via replication fork reversal (RFR). RuvA specifically binds to HJ cruciform DNA, conferring on it an open structure. The RuvB hexamer acts as an ATP-dependent pump, pulling dsDNA into and through the RuvAB complex. RuvB forms 2 homohexamers on either side of HJ DNA bound by 1 or 2 RuvA tetramers; 4 subunits per hexamer contact DNA at a time. Coordinated motions by a converter formed by DNA-disengaged RuvB subunits stimulates ATP hydrolysis and nucleotide exchange. Immobilization of the converter enables RuvB to convert the ATP-contained energy into a lever motion, pulling 2 nucleotides of DNA out of the RuvA tetramer per ATP hydrolyzed, thus driving DNA branch migration. The RuvB motors rotate together with the DNA substrate, which together with the progressing nucleotide cycle form the mechanistic basis for DNA recombination by continuous HJ branch migration. Branch migration allows RuvC to scan DNA until it finds its consensus sequence, where it cleaves and resolves cruciform DNA. This is Holliday junction branch migration complex subunit RuvB from Granulibacter bethesdensis (strain ATCC BAA-1260 / CGDNIH1).